An 863-amino-acid polypeptide reads, in one-letter code: uncharacterized protein (863 aa).

The first 29 residues, 1–29 (MHQSGSVSLCRSAISVLVATALYSPIALA), serve as a signal peptide directing secretion. Residues 595–863 (GVSYDTAMWS…NTQAGVVWTF (269 aa)) enclose the Autotransporter domain.

It is found in the cell outer membrane. This is an uncharacterized protein from Escherichia coli (strain K12).